The primary structure comprises 502 residues: Uric acid degradation bifunctional protein (502 aa).

The tract at residues 1 to 178 is OHCU decarboxylase; the sequence is MMRLKQLNEM…NSMTKHKERV (178 aa). His68 acts as the Proton donor; for OHCU decarboxylase activity in catalysis. 5-hydroxy-2-oxo-4-ureido-2,5-dihydro-1H-imidazole-5-carboxylate contacts are provided by residues Pro69, 81 to 85, and 116 to 120; these read SQEEQ and FVMAV. The segment at 179-502 is urate oxidase; that stretch reads MYYGKGDVFA…DEPDHKGALK (324 aa). Catalysis depends on Lys183, which acts as the Charge relay system; for urate oxidase activity. Lys194 serves as the catalytic Charge relay system. Thr243 functions as the Charge relay system; for urate oxidase activity in the catalytic mechanism. Thr243, Asp244, Phe354, Arg371, Ile419, Gln420, and Asn446 together coordinate urate.

The protein in the N-terminal section; belongs to the OHCU decarboxylase family. In the C-terminal section; belongs to the uricase family.

The enzyme catalyses 5-hydroxy-2-oxo-4-ureido-2,5-dihydro-1H-imidazole-5-carboxylate + H(+) = (S)-allantoin + CO2. The catalysed reaction is urate + O2 + H2O = 5-hydroxyisourate + H2O2. It functions in the pathway purine metabolism; urate degradation; (S)-allantoin from urate: step 1/3. It participates in purine metabolism; urate degradation; (S)-allantoin from urate: step 3/3. In terms of biological role, catalyzes two steps in the degradation of uric acid, i.e. the oxidation of uric acid to 5-hydroxyisourate (HIU) and the stereoselective decarboxylation of 2-oxo-4-hydroxy-4-carboxy-5-ureidoimidazoline (OHCU) to (S)-allantoin. This is Uric acid degradation bifunctional protein (uao) from Bacillus sp. (strain TB-90).